Here is a 553-residue protein sequence, read N- to C-terminus: CDP-diacylglycerol--glycerol-3-phosphate 3-phosphatidyltransferase, mitochondrial (553 aa).

The transit peptide at methionine 1–alanine 25 directs the protein to the mitochondrion. A Phosphoserine modification is found at serine 46. Alanine 121–glycine 128 contacts ATP. PLD phosphodiesterase domains follow at residues threonine 212 to tyrosine 238 and threonine 457 to serine 490. Catalysis depends on residues histidine 217, lysine 219, and aspartate 224.

Belongs to the CDP-alcohol phosphatidyltransferase class-II family.

The protein localises to the mitochondrion. The catalysed reaction is a CDP-1,2-diacyl-sn-glycerol + sn-glycerol 3-phosphate = a 1,2-diacyl-sn-glycero-3-phospho-(1'-sn-glycero-3'-phosphate) + CMP + H(+). It functions in the pathway phospholipid metabolism; phosphatidylglycerol biosynthesis; phosphatidylglycerol from CDP-diacylglycerol: step 1/2. Its activity is regulated as follows. Activated by calcium and magnesium and inhibited by other bivalent cations. Functionally, functions in the biosynthesis of the anionic phospholipids phosphatidylglycerol and cardiolipin. The protein is CDP-diacylglycerol--glycerol-3-phosphate 3-phosphatidyltransferase, mitochondrial (PGS1) of Cricetulus griseus (Chinese hamster).